The chain runs to 266 residues: HLA class II histocompatibility antigen, DR beta 3 chain (266 aa).

Positions 1–29 (MVCLKLPGGSSLAALTVTLMVLSSRLAFA) are cleaved as a signal peptide. The segment at 30–124 (GDTRPRFLEL…GESFTVQRRV (95 aa)) is beta-1. The Extracellular portion of the chain corresponds to 30 to 227 (GDTRPRFLEL…RARSESAQSK (198 aa)). Disulfide bonds link Cys-44–Cys-108 and Cys-146–Cys-202. An N-linked (GlcNAc...) asparagine glycan is attached at Asn-48. The beta-2 stretch occupies residues 125 to 227 (HPQVTVYPAK…RARSESAQSK (103 aa)). Residues 126–214 (PQVTVYPAKT…EHPSVTSALT (89 aa)) form the Ig-like C1-type domain. A helical membrane pass occupies residues 228-248 (MLSGVGGFVLGLLFLGAGLFI). Residues 249–266 (YFRNQKGHSGLQPTGFLS) are Cytoplasmic-facing.

The protein belongs to the MHC class II family. As to quaternary structure, heterotrimer that consists of an alpha chain HLA-DRA, a beta chain HLA-DRB1 and a peptide (peptide-MHCII). Newly synthesized alpha and beta chains forms a heterodimer (MHCII) that associates with the CD74/invariant chain (Ii) in the endoplasmic reticulum (ER). Ii is a trimer composed of three subunits and each subunit interacts with one MHCII dimer, blocking the peptide-binding cleft. As a result, MHCII molecules cannot bind peptides present in the ER. The complex of MHCII and CD74/Ii is transported in vesicles from ER to Golgi to lysosomes, where it encounters antigenic peptides generated via proteolysis of endocytosed antigens. MHCII dimers are dissociated from CD74/Ii by the combined action of proteolysis and HLA-DM. Lysosomal enzymes such as cathepsin, degrade CD74/Ii leaving a 24 amino acid remnant called class II-associated Ii or CLIP. Interacts (via the peptide binding cleft) with CLIP; this interaction inhibits antigen peptide binding before entry in the endosomal compartment. The displacement of CLIP and replacement by a high affinity peptide in lysosomes is performed by HLA-DM heterodimer. HLA-DM catalyzes CLIP dissociation from MHCII, stabilizes empty MHCII and mediates the selection of high affinity peptides. Interacts with HLA-DM heterodimer; this interaction is direct. Interacts with TCR (via CDR3). Interacts (via beta-2 domain) with CD4 coreceptor (via Ig-like V-type domain); this interaction is of exceptionally low affinity yet necessary for optimal recognition of antigenic peptides. Ubiquitinated by MARCHF1 and MARCHF8 at Lys-254 leading to sorting into the endosome system and down-regulation of MHC class II. Expressed in professional APCs: monocyte/macrophages, dendritic cells and B cells (at protein level).

It is found in the cell membrane. It localises to the endoplasmic reticulum membrane. Its subcellular location is the lysosome membrane. The protein resides in the late endosome membrane. The protein localises to the autolysosome membrane. In terms of biological role, a beta chain of antigen-presenting major histocompatibility complex class II (MHCII) molecule. In complex with the alpha chain HLA-DRA, displays antigenic peptides on professional antigen presenting cells (APCs) for recognition by alpha-beta T cell receptor (TCR) on HLA-DRB3-restricted CD4-positive T cells. This guides antigen-specific T-helper effector functions, both antibody-mediated immune response and macrophage activation, to ultimately eliminate the infectious agents and transformed cells. Typically presents extracellular peptide antigens of 10 to 30 amino acids that arise from proteolysis of endocytosed antigens in lysosomes. In the tumor microenvironment, presents antigenic peptides that are primarily generated in tumor-resident APCs likely via phagocytosis of apoptotic tumor cells or macropinocytosis of secreted tumor proteins. Presents peptides derived from intracellular proteins that are trapped in autolysosomes after macroautophagy, a mechanism especially relevant for T cell selection in the thymus and central immune tolerance. The selection of the immunodominant epitopes follows two processing modes: 'bind first, cut/trim later' for pathogen-derived antigenic peptides and 'cut first, bind later' for autoantigens/self-peptides. The anchor residue at position 1 of the peptide N-terminus, usually a large hydrophobic residue, is essential for high affinity interaction with MHCII molecules. ALLELE DRB3*01:01: Exclusively presents several immunogenic epitopes derived from C.tetani neurotoxin tetX, playing a significant role in immune recognition and long-term protection. Presents viral epitopes derived from HHV-6B U11, TRX2/U56 and U85 antigens to polyfunctional CD4-positive T cells with cytotoxic activity implicated in control of HHV-6B infection. Functionally, ALLELE DRB3*02:02 Exclusively presents several immunogenic epitopes derived from C.tetani neurotoxin tetX, playing a significant role in immune recognition and long-term protection. Upon EBV infection, presents to CD4-positive T cells latent antigen EBNA2 (PRSPTVFYNIPPMPLPPSQL) and lytic antigen BZLF1 (LTAYHVSTAPTGSWF) peptides, driving oligoclonal expansion and selection of virus-specific memory T cell subsets with cytotoxic potential to directly eliminate virus-infected B cells. Presents viral epitopes derived from HHV-6B U11, gB/U39 and gH/U48 antigens to polyfunctional CD4-positive T cells with cytotoxic activity implicated in control of HHV-6B infection. Plays a minor role in CD4-positive T cell immune response against Dengue virus by presenting conserved peptides from capsid and non-structural NS3 proteins. Displays peptides derived from IAV matrix protein M, implying a role in protection against IAV infection. In the context of tumor immunesurveillance, may present to T-helper 1 cells an immunogenic epitope derived from tumor-associated antigen WT1 (KRYFKLSHLQMHSRKH), likely providing for effective antitumor immunity in a wide range of solid and hematological malignancies. Presents to Vbeta2-positive T-helper 1 cells specifically an immunodominant peptide derived from tumor antigen CTAG1A/NY-ESO-1(PGVLLKEFTVSGNILTIRLTAADHR) and confers protective memory response. In metastatic epithelial tumors, presents to intratumoral CD4-positive T cells a TP53 neoantigen (HYNYMCNSSCMGSMNRRPILTIITL) carrying G245S hotspot driver mutation and may mediate tumor regression. Its function is as follows. ALLELE DRB3*03:01: Presents a series of conserved peptides derived from the M.tuberculosis PPE family of proteins, in particular PPE29 and PPE33, known to be highly immunogenic. Presents immunogenic epitopes derived from C.tetani neurotoxin tetX, playing a role in immune recognition and long-term protection. Displays immunodominant viral peptides from HCV non-structural protein NS2, as part of a broad range T-helper response to resolve infection. This is HLA class II histocompatibility antigen, DR beta 3 chain (HLA-DRB3) from Homo sapiens (Human).